Reading from the N-terminus, the 292-residue chain is Probable 2-(5''-triphosphoribosyl)-3'-dephosphocoenzyme-A synthase (292 aa).

Belongs to the CitG/MdcB family.

It catalyses the reaction 3'-dephospho-CoA + ATP = 2'-(5''-triphospho-alpha-D-ribosyl)-3'-dephospho-CoA + adenine. The polypeptide is Probable 2-(5''-triphosphoribosyl)-3'-dephosphocoenzyme-A synthase (Shigella boydii serotype 18 (strain CDC 3083-94 / BS512)).